Here is a 670-residue protein sequence, read N- to C-terminus: Oligopeptidase PepF (670 aa).

Residue His456 coordinates Zn(2+). Glu457 is a catalytic residue. Zn(2+) contacts are provided by His460 and His463.

This sequence belongs to the peptidase M3B family. Zn(2+) is required as a cofactor.

The protein localises to the cytoplasm. Overexpression results in inhibition of sporulation initiation. This sporulation deficiency could be the result of hydrolysis by PepF of the PhrA peptide, a phosphatase regulator. Thus, overexpression of PepF appears to act at the level of the phosphorelay, most likely through modulation of the negative role played by phosphatases. Overexpression of PepF also affects the activity of the competence and sporulation stimulating factor PhrC. This Bacillus subtilis (strain 168) protein is Oligopeptidase PepF.